Consider the following 30-residue polypeptide: Cycloviolin-C (30 aa).

A cross-link (cyclopeptide (Gly-Asn)) is located at residues 1–30; the sequence is GIPCGESCVFIPCLTTVAGCSCKNKVCYRN. 3 disulfides stabilise this stretch: Cys4–Cys20, Cys8–Cys22, and Cys13–Cys27.

This is a cyclic peptide.

Its function is as follows. Probably participates in a plant defense mechanism. Has anti-HIV activity. This Leonia cymosa (Sacha uba) protein is Cycloviolin-C.